Reading from the N-terminus, the 490-residue chain is Betaine aldehyde dehydrogenase (490 aa).

The K(+) site is built by Thr-26, Ile-27, and Asp-93. 150–152 (GAW) provides a ligand contact to NAD(+). Lys-162 functions as the Charge relay system in the catalytic mechanism. Residue 176–179 (KPSE) coordinates NAD(+). Val-180 is a binding site for K(+). 230–233 (GVAS) contributes to the NAD(+) binding site. Residue Leu-246 coordinates K(+). Glu-252 functions as the Proton acceptor in the catalytic mechanism. NAD(+)-binding residues include Gly-254, Cys-286, and Glu-387. Cys-286 functions as the Nucleophile in the catalytic mechanism. A Cysteine sulfenic acid (-SOH) modification is found at Cys-286. Residues Lys-457 and Gly-460 each coordinate K(+). The Charge relay system role is filled by Glu-464.

The protein belongs to the aldehyde dehydrogenase family. In terms of assembly, dimer of dimers. Requires K(+) as cofactor.

It carries out the reaction betaine aldehyde + NAD(+) + H2O = glycine betaine + NADH + 2 H(+). Its pathway is amine and polyamine biosynthesis; betaine biosynthesis via choline pathway; betaine from betaine aldehyde: step 1/1. In terms of biological role, involved in the biosynthesis of the osmoprotectant glycine betaine. Catalyzes the irreversible oxidation of betaine aldehyde to the corresponding acid. This Shigella flexneri serotype 5b (strain 8401) protein is Betaine aldehyde dehydrogenase.